The following is a 354-amino-acid chain: Isopentenyl-diphosphate delta-isomerase (354 aa).

11-12 is a binding site for substrate; that stretch reads KK. Residues Ser-67, 68–70, Ser-98, and Asn-126 contribute to the FMN site; that span reads SMT. 98–100 contacts substrate; that stretch reads SFK. Gln-160 contacts substrate. A Mg(2+)-binding site is contributed by Glu-161. FMN contacts are provided by residues Lys-192, Thr-222, and 289-290; that span reads AA.

It belongs to the IPP isomerase type 2 family. As to quaternary structure, homooctamer. Dimer of tetramers. It depends on FMN as a cofactor. NADPH is required as a cofactor. Mg(2+) serves as cofactor.

It localises to the cytoplasm. The enzyme catalyses isopentenyl diphosphate = dimethylallyl diphosphate. In terms of biological role, involved in the biosynthesis of isoprenoids. Catalyzes the 1,3-allylic rearrangement of the homoallylic substrate isopentenyl (IPP) to its allylic isomer, dimethylallyl diphosphate (DMAPP). The protein is Isopentenyl-diphosphate delta-isomerase of Borrelia garinii subsp. bavariensis (strain ATCC BAA-2496 / DSM 23469 / PBi) (Borreliella bavariensis).